The sequence spans 211 residues: Large ribosomal subunit protein uL3 (211 aa).

A disordered region spans residues 130–154 (RGPMAHGSKFHRHQGSNGSATTPGR).

It belongs to the universal ribosomal protein uL3 family. In terms of assembly, part of the 50S ribosomal subunit. Forms a cluster with proteins L14 and L19.

One of the primary rRNA binding proteins, it binds directly near the 3'-end of the 23S rRNA, where it nucleates assembly of the 50S subunit. This chain is Large ribosomal subunit protein uL3, found in Lachnospira eligens (strain ATCC 27750 / DSM 3376 / VPI C15-48 / C15-B4) (Eubacterium eligens).